The chain runs to 107 residues: Replication initiation control protein YabA (107 aa).

Residues His81, Cys83, Cys97, and Cys100 each coordinate Zn(2+).

Belongs to the YabA family. Homotetramer. Interacts with both DnaA and DnaN, acting as a bridge between these two proteins. Zn(2+) serves as cofactor.

The protein resides in the cytoplasm. It is found in the nucleoid. Its function is as follows. Involved in control of chromosome replication initiation. Inhibits the cooperative binding of DnaA to the oriC region, thus negatively regulating initiation of chromosome replication. Inhibits the ability of DnaA-ATP to form a helix on DNA; does not disassemble preformed DnaA-DNA helices. Decreases the residence time of DnaA on the chromosome at its binding sites (oriC, replication forks and promoter-binding sites). Tethers DnaA to the replication machinery via the DNA polymerase beta sliding clamp subunit (dnaN). Associates with oriC and other DnaA targets on the chromosome in a DnaA-dependent manner. This is Replication initiation control protein YabA from Streptococcus equi subsp. zooepidemicus (strain MGCS10565).